Consider the following 452-residue polypeptide: tRNA modification GTPase MnmE (452 aa).

Residues Arg22, Glu80, and Lys119 each coordinate (6S)-5-formyl-5,6,7,8-tetrahydrofolate. Residues 213 to 375 (GVRTVIVGKP…LENKIYEKFF (163 aa)) enclose the TrmE-type G domain. Position 223 (Asn223) interacts with K(+). GTP-binding positions include 223–228 (NSGKST), 242–248 (TDIPGTT), and 267–270 (DTAG). Ser227 lines the Mg(2+) pocket. The K(+) site is built by Thr242, Ile244, and Thr247. Mg(2+) is bound at residue Thr248. (6S)-5-formyl-5,6,7,8-tetrahydrofolate is bound at residue Lys452.

It belongs to the TRAFAC class TrmE-Era-EngA-EngB-Septin-like GTPase superfamily. TrmE GTPase family. Homodimer. Heterotetramer of two MnmE and two MnmG subunits. K(+) serves as cofactor.

It is found in the cytoplasm. Its function is as follows. Exhibits a very high intrinsic GTPase hydrolysis rate. Involved in the addition of a carboxymethylaminomethyl (cmnm) group at the wobble position (U34) of certain tRNAs, forming tRNA-cmnm(5)s(2)U34. The protein is tRNA modification GTPase MnmE of Petrotoga mobilis (strain DSM 10674 / SJ95).